The chain runs to 276 residues: Undecaprenyl-diphosphatase 2 (276 aa).

Helical transmembrane passes span 1 to 21, 44 to 64, 87 to 107, 114 to 134, 150 to 170, 190 to 210, 222 to 242, and 251 to 271; these read MSLW…LFPV, QLLP…LWYF, GHLM…GLLL, VFHD…LLWL, MTFK…IPGF, AAEF…VLEL, DALL…RFLM, and LASF…WFML.

Belongs to the UppP family.

The protein localises to the cell inner membrane. The enzyme catalyses di-trans,octa-cis-undecaprenyl diphosphate + H2O = di-trans,octa-cis-undecaprenyl phosphate + phosphate + H(+). Its function is as follows. Catalyzes the dephosphorylation of undecaprenyl diphosphate (UPP). Confers resistance to bacitracin. The protein is Undecaprenyl-diphosphatase 2 of Burkholderia orbicola (strain AU 1054).